A 184-amino-acid polypeptide reads, in one-letter code: MKNVIDPFISLSYWPSAGGFGSNTNILETNIINSSVVLSVLIYFGKGVLSNLLDNRKQKILETIRNSEELCKGAIDQLEKARACLRNVEMIADEIQVNGNSQIEREKEDLLNTASDNLEQLEDPKNETIYSEQQRAFDQIRQQVSRQALRRAIGTLNSRLNTELHLRTIDHNIGLLRTMMNTND.

The helical transmembrane segment at 31–49 threads the bilayer; that stretch reads IINSSVVLSVLIYFGKGVL.

It belongs to the ATPase B chain family. As to quaternary structure, F-type ATPases have 2 components, F(1) - the catalytic core - and F(0) - the membrane proton channel. F(1) has five subunits: alpha(3), beta(3), gamma(1), delta(1), epsilon(1). F(0) has four main subunits: a(1), b(1), b'(1) and c(10-14). The alpha and beta chains form an alternating ring which encloses part of the gamma chain. F(1) is attached to F(0) by a central stalk formed by the gamma and epsilon chains, while a peripheral stalk is formed by the delta, b and b' chains.

The protein localises to the plastid. It localises to the chloroplast thylakoid membrane. Its function is as follows. F(1)F(0) ATP synthase produces ATP from ADP in the presence of a proton or sodium gradient. F-type ATPases consist of two structural domains, F(1) containing the extramembraneous catalytic core and F(0) containing the membrane proton channel, linked together by a central stalk and a peripheral stalk. During catalysis, ATP synthesis in the catalytic domain of F(1) is coupled via a rotary mechanism of the central stalk subunits to proton translocation. In terms of biological role, component of the F(0) channel, it forms part of the peripheral stalk, linking F(1) to F(0). This Pinus thunbergii (Japanese black pine) protein is ATP synthase subunit b, chloroplastic.